A 439-amino-acid polypeptide reads, in one-letter code: Glucose-1-phosphate adenylyltransferase (439 aa).

Alpha-D-glucose 1-phosphate is bound by residues G172, 187–188 (EK), and S219.

This sequence belongs to the bacterial/plant glucose-1-phosphate adenylyltransferase family. Homotetramer.

The catalysed reaction is alpha-D-glucose 1-phosphate + ATP + H(+) = ADP-alpha-D-glucose + diphosphate. It participates in glycan biosynthesis; glycogen biosynthesis. Its function is as follows. Involved in the biosynthesis of ADP-glucose, a building block required for the elongation reactions to produce glycogen. Catalyzes the reaction between ATP and alpha-D-glucose 1-phosphate (G1P) to produce pyrophosphate and ADP-Glc. The sequence is that of Glucose-1-phosphate adenylyltransferase from Synechocystis sp. (strain ATCC 27184 / PCC 6803 / Kazusa).